Reading from the N-terminus, the 448-residue chain is Probable D-serine dehydratase (448 aa).

Lysine 119 carries the post-translational modification N6-(pyridoxal phosphate)lysine.

Belongs to the serine/threonine dehydratase family. DsdA subfamily. Pyridoxal 5'-phosphate serves as cofactor.

The catalysed reaction is D-serine = pyruvate + NH4(+). The protein is Probable D-serine dehydratase of Pseudomonas aeruginosa (strain UCBPP-PA14).